Here is a 61-residue protein sequence, read N- to C-terminus: UPF0181 protein Ent638_2380 (61 aa).

The protein belongs to the UPF0181 family.

The polypeptide is UPF0181 protein Ent638_2380 (Enterobacter sp. (strain 638)).